The primary structure comprises 417 residues: Serine hydroxymethyltransferase (417 aa).

Residues leucine 121 and 125 to 127 (GHL) contribute to the (6S)-5,6,7,8-tetrahydrofolate site. Lysine 229 bears the N6-(pyridoxal phosphate)lysine mark. (6S)-5,6,7,8-tetrahydrofolate is bound at residue 355 to 357 (SPF).

The protein belongs to the SHMT family. As to quaternary structure, homodimer. Requires pyridoxal 5'-phosphate as cofactor.

It localises to the cytoplasm. It catalyses the reaction (6R)-5,10-methylene-5,6,7,8-tetrahydrofolate + glycine + H2O = (6S)-5,6,7,8-tetrahydrofolate + L-serine. It functions in the pathway one-carbon metabolism; tetrahydrofolate interconversion. It participates in amino-acid biosynthesis; glycine biosynthesis; glycine from L-serine: step 1/1. In terms of biological role, catalyzes the reversible interconversion of serine and glycine with tetrahydrofolate (THF) serving as the one-carbon carrier. This reaction serves as the major source of one-carbon groups required for the biosynthesis of purines, thymidylate, methionine, and other important biomolecules. Also exhibits THF-independent aldolase activity toward beta-hydroxyamino acids, producing glycine and aldehydes, via a retro-aldol mechanism. This is Serine hydroxymethyltransferase from Shewanella oneidensis (strain ATCC 700550 / JCM 31522 / CIP 106686 / LMG 19005 / NCIMB 14063 / MR-1).